A 483-amino-acid chain; its full sequence is ATP synthase subunit beta (483 aa).

169–176 (GGAGVGKT) is a binding site for ATP.

It belongs to the ATPase alpha/beta chains family. F-type ATPases have 2 components, CF(1) - the catalytic core - and CF(0) - the membrane proton channel. CF(1) has five subunits: alpha(3), beta(3), gamma(1), delta(1), epsilon(1). CF(0) has three main subunits: a(1), b(2) and c(9-12). The alpha and beta chains form an alternating ring which encloses part of the gamma chain. CF(1) is attached to CF(0) by a central stalk formed by the gamma and epsilon chains, while a peripheral stalk is formed by the delta and b chains.

It is found in the cell membrane. The catalysed reaction is ATP + H2O + 4 H(+)(in) = ADP + phosphate + 5 H(+)(out). Its function is as follows. Produces ATP from ADP in the presence of a proton gradient across the membrane. The catalytic sites are hosted primarily by the beta subunits. This Corynebacterium glutamicum (strain R) protein is ATP synthase subunit beta.